The sequence spans 215 residues: Triosephosphate isomerase (215 aa).

Catalysis depends on His-82, which acts as the Electrophile. Glu-153 serves as the catalytic Proton acceptor.

The protein belongs to the triosephosphate isomerase family. As to quaternary structure, homodimer.

The enzyme catalyses D-glyceraldehyde 3-phosphate = dihydroxyacetone phosphate. It participates in carbohydrate biosynthesis; gluconeogenesis. Its pathway is carbohydrate degradation; glycolysis; D-glyceraldehyde 3-phosphate from glycerone phosphate: step 1/1. This Heliothis virescens (Tobacco budworm moth) protein is Triosephosphate isomerase (Tpi).